The primary structure comprises 278 residues: UPF0758 protein BURPS668_0979 (278 aa).

The segment at 1–64 (MQYEIVSAGE…ATAAARRGRD (64 aa)) is disordered. Residues 22-59 (AAAPAAPSSAVPSSAALSSAALSSAARPTGAPPATAAA) are compositionally biased toward low complexity. An MPN domain is found at 156–278 (LVDSPGAVDD…TFSFAQAGWI (123 aa)). Positions 227, 229, and 240 each coordinate Zn(2+). The short motif at 227 to 240 (HNHPSGAVRPSAAD) is the JAMM motif element.

It belongs to the UPF0758 family.

This Burkholderia pseudomallei (strain 668) protein is UPF0758 protein BURPS668_0979.